The sequence spans 288 residues: ATP synthase gamma chain (288 aa).

It belongs to the ATPase gamma chain family. As to quaternary structure, F-type ATPases have 2 components, CF(1) - the catalytic core - and CF(0) - the membrane proton channel. CF(1) has five subunits: alpha(3), beta(3), gamma(1), delta(1), epsilon(1). CF(0) has three main subunits: a, b and c.

Its subcellular location is the cell inner membrane. Produces ATP from ADP in the presence of a proton gradient across the membrane. The gamma chain is believed to be important in regulating ATPase activity and the flow of protons through the CF(0) complex. The protein is ATP synthase gamma chain of Vibrio cholerae serotype O1 (strain ATCC 39541 / Classical Ogawa 395 / O395).